The primary structure comprises 473 residues: Zinc finger and SCAN domain-containing protein 21 (473 aa).

Lys-27 is covalently cross-linked (Glycyl lysine isopeptide (Lys-Gly) (interchain with G-Cter in SUMO2)). Residues 45-127 (RQRFRQFGYH…TLLEDLEREL (83 aa)) form the SCAN box domain. A disordered region spans residues 127-171 (LDEPGHQVSTPPNEQKPVWEKISSSGTAKESPSSMQPQPLETSHN). The segment covering 148–171 (ISSSGTAKESPSSMQPQPLETSHN) has biased composition (polar residues). Residues Lys-221 and Lys-232 each participate in a glycyl lysine isopeptide (Lys-Gly) (interchain with G-Cter in SUMO2) cross-link. A disordered region spans residues 244–272 (LENEKGTKPPLQEAGSKKGRESVPTKPTP). Residues 258 to 272 (GSKKGRESVPTKPTP) are compositionally biased toward basic and acidic residues. 7 C2H2-type zinc fingers span residues 277-299 (YICAECGKAFSNSSNLTKHRRTH), 305-327 (YVCTKCGKAFSHSSNLTLHYRTH), 333-354 (YDCKCGKAFGQSSDLLKHQRMH), 360-382 (YQCKDCGKAFSGKGSLIRHYRIH), 388-410 (YQCNECGKSFSQHAGLSSHQRLH), 416-438 (YKCKECGKAFNHSSNFNKHHRIH), and 444-466 (YWCHHCGKTFCSKSNLSKHQRVH). Lys-349 is covalently cross-linked (Glycyl lysine isopeptide (Lys-Gly) (interchain with G-Cter in SUMO2)).

This sequence belongs to the krueppel C2H2-type zinc-finger protein family.

The protein resides in the nucleus. In terms of biological role, strong transcriptional activator. Plays an important role in spermatogenesis; essential for the progression of meiotic prophase I in spermatocytes. This Gorilla gorilla gorilla (Western lowland gorilla) protein is Zinc finger and SCAN domain-containing protein 21 (ZSCAN21).